The primary structure comprises 673 residues: Sodium/myo-inositol cotransporter 2 (673 aa).

Residues 1-27 (MESATISPQPPQSDSLEAFPQKSMEPA) are Extracellular-facing. A helical transmembrane segment spans residues 28–48 (DIAVLVLYFLFVLAVGLWSTV). Residues 49–65 (RTKRDTVKGYFLAGGDM) lie on the Cytoplasmic side of the membrane. The chain crosses the membrane as a helical span at residues 66-88 (VWWPVGASLFASNVGSGHFIGLA). Residues 89–102 (GSGAAVGISVAAYE) lie on the Extracellular side of the membrane. The chain crosses the membrane as a helical span at residues 103 to 123 (LNGLFSVLMLAWVFLPIYIAG). Residues 124–148 (QVTTMPEYLRRRFGGNRISITLAVL) are Cytoplasmic-facing. Residues 149 to 169 (YLFIYIFTKISVDMYAGAIFI) traverse the membrane as a helical segment. The Extracellular segment spans residues 170 to 180 (QQSLHLDLYLA). Residues 181-201 (IVGLLAITALYTVAGGLAAVI) form a helical membrane-spanning segment. The Cytoplasmic portion of the chain corresponds to 202–208 (YTDALQT). The helical transmembrane segment at 209-229 (VIMLIGAFILMGYSFAAVGGM) threads the bilayer. The Extracellular segment spans residues 230-272 (EGLKDQYFLALASNRSENSSCGLPREDAFHIFRDPLTSDLPWP). Residues 273–293 (GILFGMSIPSLWYWCTDQVIV) traverse the membrane as a helical segment. Residues 294 to 308 (QRSLAAKNLSHAKGG) are Cytoplasmic-facing. Residues 309 to 329 (SLMAAYLKVLPLFLMVFPGMV) traverse the membrane as a helical segment. Topologically, residues 330-375 (SRVLFPDQVACAHPDICQRVCSNPSGCSDIAYPKLVLELLPTGLRG) are extracellular. The helical transmembrane segment at 376 to 396 (LMMAVMVAALMSSLTSIFNSA) threads the bilayer. The Cytoplasmic portion of the chain corresponds to 397-418 (STIFTMDLWNHIRPRASERELM). A helical transmembrane segment spans residues 419–439 (IVGRIFVFALVLVSILWIPIV). Residues 440-446 (QASQGGQ) lie on the Extracellular side of the membrane. Residues 447–467 (LFIYIQSISSYLQPPVAMVFI) form a helical membrane-spanning segment. The Cytoplasmic segment spans residues 468 to 479 (MGCFWKRTNEKG). The helical transmembrane segment at 480-500 (AFSGLILGLLLGLVRLILDFV) threads the bilayer. Topologically, residues 501 to 521 (YAQPRCDQPDDRPAVVKDVHY) are extracellular. Residues 522-542 (LYFSMILSFTTLITVVTVSWF) form a helical membrane-spanning segment. Over 543 to 652 (TETPSKEMVS…SLEENPLVKT (110 aa)) the chain is Cytoplasmic. A helical transmembrane segment spans residues 653–673 (LLDVNCIVCISCAIFLWGYFA).

Belongs to the sodium:solute symporter (SSF) (TC 2.A.21) family.

The protein localises to the membrane. The protein resides in the apical cell membrane. It catalyses the reaction myo-inositol(out) + 2 Na(+)(out) = myo-inositol(in) + 2 Na(+)(in). It carries out the reaction 1D-chiro-inositol(out) + 2 Na(+)(out) = 1D-chiro-inositol(in) + 2 Na(+)(in). The enzyme catalyses D-glucose(out) + 2 Na(+)(out) = D-glucose(in) + 2 Na(+)(in). The catalysed reaction is D-xylose(out) + 2 Na(+)(out) = D-xylose(in) + 2 Na(+)(in). With respect to regulation, MI transport activity inhibited by D-chiro-inositol (DCI), phlorizin (Pz) and sodium (Na(+)). Insulin increases D-chiro-inositol uptake. Functionally, involved in the sodium-dependent cotransport of myo-inositol (MI) with a Na(+):MI stoichiometry of 2:1. Exclusively responsible for apical MI transport and absorption in intestine. Can also transport D-chiro-inositol (DCI) but not L-fucose. Exhibits stereospecific cotransport of both D-glucose and D-xylose. May induce apoptosis through the TNF-alpha, PDCD1 pathway. May play a role in the regulation of MI concentration in serum, involving reabsorption in at least the proximal tubule of the kidney. The sequence is that of Sodium/myo-inositol cotransporter 2 from Mus musculus (Mouse).